Consider the following 64-residue polypeptide: Large ribosomal subunit protein bL32 (64 aa).

Basic residues predominate over residues 1 to 16 (MAVPKHRKSKAKKRSR). The segment at 1–22 (MAVPKHRKSKAKKRSRQAANDK) is disordered.

It belongs to the bacterial ribosomal protein bL32 family.

This Brachyspira hyodysenteriae (strain ATCC 49526 / WA1) protein is Large ribosomal subunit protein bL32.